Reading from the N-terminus, the 407-residue chain is Nuclear hormone receptor family member nhr-86 (407 aa).

Residues 21-96 constitute a DNA-binding region (nuclear receptor); it reads KSTCSICRED…VGMNPAGVQQ (76 aa). 2 NR C4-type zinc fingers span residues 24-44 and 60-79; these read CSIC…CRAC and CRGN…CRSC. The 276-residue stretch at 130 to 405 folds into the NR LBD domain; that stretch reads AQSALVEDLH…KDFYDLVNGK (276 aa). Residues 394–405 are AF-2; that stretch reads PPKDFYDLVNGK.

The protein belongs to the nuclear hormone receptor family. Expressed in intestinal epithelial cells, excretory gland cells and in several head neurons.

The protein resides in the nucleus. Nuclear receptor which acts as a transcription activator. Binds small molecule ligands, such as phenazine 1-carboxamide (PCN), a pathogen-derived metabolite, leading to modulation of innate immune responses against virulent pathogens. On exposure to exogenous PCN, P.aeruginosa and other xenobiotic immunostimulant such as R24, activates immune response genes, including irg-4, irg-5, mul-1, drd-50, cyp-35C1 and ugt-30, probably via direct interaction with their promoters, and independent of the p38 MAPK pmk-1 pathway. Exhibits higher affinity to R24 than PCN and thus induces stronger immune response. Binds its own promoter thereby autoregulating its expression in the head hypodermis and the pharynx. Possibly plays a role in lipid storage or catabolism. This is Nuclear hormone receptor family member nhr-86 (nhr-86) from Caenorhabditis elegans.